A 267-amino-acid chain; its full sequence is Small ribosomal subunit protein uS3 (267 aa).

The KH type-2 domain occupies 38 to 106 (IRKLLATGME…QVQLNILEVK (69 aa)). The disordered stretch occupies residues 215–267 (TAASAPAGDRDRPRRERPSRPRRSGSTGTTATSTEAGRAATAVVEAPAENQEG). Residues 222-233 (GDRDRPRRERPS) are compositionally biased toward basic and acidic residues. Residues 238-256 (SGSTGTTATSTEAGRAATA) show a composition bias toward low complexity.

Belongs to the universal ribosomal protein uS3 family. As to quaternary structure, part of the 30S ribosomal subunit. Forms a tight complex with proteins S10 and S14.

Binds the lower part of the 30S subunit head. Binds mRNA in the 70S ribosome, positioning it for translation. This chain is Small ribosomal subunit protein uS3, found in Nocardia farcinica (strain IFM 10152).